The sequence spans 416 residues: UDP-N-acetylglucosamine 1-carboxyvinyltransferase (416 aa).

Lys-22 to Asn-23 lines the phosphoenolpyruvate pocket. Arg-92 is a binding site for UDP-N-acetyl-alpha-D-glucosamine. Catalysis depends on Cys-116, which acts as the Proton donor. Cys-116 carries the 2-(S-cysteinyl)pyruvic acid O-phosphothioketal modification. Residues Asp-306 and Ile-328 each coordinate UDP-N-acetyl-alpha-D-glucosamine.

The protein belongs to the EPSP synthase family. MurA subfamily.

The protein localises to the cytoplasm. It catalyses the reaction phosphoenolpyruvate + UDP-N-acetyl-alpha-D-glucosamine = UDP-N-acetyl-3-O-(1-carboxyvinyl)-alpha-D-glucosamine + phosphate. The protein operates within cell wall biogenesis; peptidoglycan biosynthesis. Cell wall formation. Adds enolpyruvyl to UDP-N-acetylglucosamine. This chain is UDP-N-acetylglucosamine 1-carboxyvinyltransferase, found in Buchnera aphidicola subsp. Baizongia pistaciae (strain Bp).